Consider the following 172-residue polypeptide: Small ribosomal subunit protein uS5 (172 aa).

In terms of domain architecture, S5 DRBM spans 11–74; the sequence is LSEVLVDVNR…QAAKKRMMKV (64 aa).

It belongs to the universal ribosomal protein uS5 family. Part of the 30S ribosomal subunit. Contacts proteins S4 and S8.

In terms of biological role, with S4 and S12 plays an important role in translational accuracy. Functionally, located at the back of the 30S subunit body where it stabilizes the conformation of the head with respect to the body. This chain is Small ribosomal subunit protein uS5, found in Rickettsia canadensis (strain McKiel).